Consider the following 312-residue polypeptide: tRNA uridine(34) hydroxylase (312 aa).

One can recognise a Rhodanese domain in the interval 123-216 (DRDDVVVLDV…YGIEQGGEDF (94 aa)). Cysteine 176 acts as the Cysteine persulfide intermediate in catalysis.

The protein belongs to the TrhO family.

The catalysed reaction is uridine(34) in tRNA + AH2 + O2 = 5-hydroxyuridine(34) in tRNA + A + H2O. Catalyzes oxygen-dependent 5-hydroxyuridine (ho5U) modification at position 34 in tRNAs. The polypeptide is tRNA uridine(34) hydroxylase (Cytophaga hutchinsonii (strain ATCC 33406 / DSM 1761 / CIP 103989 / NBRC 15051 / NCIMB 9469 / D465)).